The following is a 221-amino-acid chain: 7-cyano-7-deazaguanine synthase (221 aa).

Residue 10–20 coordinates ATP; sequence FSGGQDSTTCL. Zn(2+) contacts are provided by Cys186, Cys195, Cys198, and Cys201.

The protein belongs to the QueC family. Homodimer. Zn(2+) serves as cofactor.

The enzyme catalyses 7-carboxy-7-deazaguanine + NH4(+) + ATP = 7-cyano-7-deazaguanine + ADP + phosphate + H2O + H(+). The protein operates within purine metabolism; 7-cyano-7-deazaguanine biosynthesis. Functionally, catalyzes the ATP-dependent conversion of 7-carboxy-7-deazaguanine (CDG) to 7-cyano-7-deazaguanine (preQ(0)). This chain is 7-cyano-7-deazaguanine synthase, found in Geobacillus thermodenitrificans (strain NG80-2).